The sequence spans 292 residues: Elongation factor Ts (292 aa).

The segment at 82–85 (TDFV) is involved in Mg(2+) ion dislocation from EF-Tu.

The protein belongs to the EF-Ts family.

The protein resides in the cytoplasm. In terms of biological role, associates with the EF-Tu.GDP complex and induces the exchange of GDP to GTP. It remains bound to the aminoacyl-tRNA.EF-Tu.GTP complex up to the GTP hydrolysis stage on the ribosome. This Legionella pneumophila (strain Lens) protein is Elongation factor Ts.